The chain runs to 72 residues: Translational regulator CsrA (72 aa).

Belongs to the CsrA/RsmA family. Homodimer; the beta-strands of each monomer intercalate to form a hydrophobic core, while the alpha-helices form wings that extend away from the core.

It localises to the cytoplasm. Its function is as follows. A translational regulator that binds mRNA to regulate translation initiation and/or mRNA stability. Usually binds in the 5'-UTR at or near the Shine-Dalgarno sequence preventing ribosome-binding, thus repressing translation. Its main target seems to be the major flagellin gene, while its function is anatagonized by FliW. In Clostridium novyi (strain NT), this protein is Translational regulator CsrA.